The following is a 378-amino-acid chain: Metacaspase-1B (378 aa).

Residues methionine 1–alanine 70 form a disordered region. Over residues glutamine 10–glycine 29 the composition is skewed to low complexity. Active-site residues include histidine 169 and cysteine 225.

This sequence belongs to the peptidase C14B family.

Functionally, involved in cell death (apoptosis). In Aspergillus terreus (strain NIH 2624 / FGSC A1156), this protein is Metacaspase-1B (casB).